The primary structure comprises 317 residues: GTPase Era (317 aa).

The region spanning 17 to 190 (RAGFACFVGR…ADLLTPLLPE (174 aa)) is the Era-type G domain. Residues 25–32 (GRPNAGKS) are G1. Residue 25-32 (GRPNAGKS) participates in GTP binding. The segment at 51–55 (QTTRH) is G2. The tract at residues 72 to 75 (DTPG) is G3. GTP contacts are provided by residues 72–76 (DTPGL) and 135–138 (TKTD). The G4 stretch occupies residues 135–138 (TKTD). The segment at 169 to 171 (VSA) is G5. Residues 221 to 303 (VRDELPHSIA…FLDLHVKVAK (83 aa)) enclose the KH type-2 domain.

It belongs to the TRAFAC class TrmE-Era-EngA-EngB-Septin-like GTPase superfamily. Era GTPase family. In terms of assembly, monomer.

The protein resides in the cytoplasm. It localises to the cell membrane. Functionally, an essential GTPase that binds both GDP and GTP, with rapid nucleotide exchange. Plays a role in 16S rRNA processing and 30S ribosomal subunit biogenesis and possibly also in cell cycle regulation and energy metabolism. This chain is GTPase Era, found in Streptomyces coelicolor (strain ATCC BAA-471 / A3(2) / M145).